The primary structure comprises 452 residues: Chaperone SurA (452 aa).

The first 28 residues, 1–28, serve as a signal peptide directing secretion; the sequence is MKKTLRFAAVVSSLAASAALLVAAPAAA. 2 consecutive PpiC domains span residues 186 to 288 and 302 to 400; these read QQDL…RLVD and IVQT…QVLN.

Its subcellular location is the periplasm. The catalysed reaction is [protein]-peptidylproline (omega=180) = [protein]-peptidylproline (omega=0). Its function is as follows. Chaperone involved in the correct folding and assembly of outer membrane proteins. Recognizes specific patterns of aromatic residues and the orientation of their side chains, which are found more frequently in integral outer membrane proteins. May act in both early periplasmic and late outer membrane-associated steps of protein maturation. This is Chaperone SurA from Burkholderia orbicola (strain AU 1054).